Consider the following 384-residue polypeptide: 3,7-dimethylxanthine N-methyltransferase 1 (384 aa).

Residues Tyr-18, Cys-61, Asn-66, Asp-100, Leu-101, Ser-139, Phe-140, and Cys-156 each contribute to the S-adenosyl-L-homocysteine site. Residue Tyr-157 coordinates theobromine. Residue Cys-158 coordinates S-adenosyl-L-homocysteine. Residues His-160 and Trp-161 each contribute to the theobromine site. Asn-178 is a Mg(2+) binding site. Ser-237 contributes to the theobromine binding site. Residues Asp-260, Phe-262, and Asn-263 each coordinate Mg(2+). Tyr-368 provides a ligand contact to theobromine.

Belongs to the methyltransferase superfamily. Type-7 methyltransferase family. Requires Mg(2+) as cofactor. In terms of tissue distribution, highly expressed in developing endosperm and immature fruits (grains). Detected in young leaves and flower buds, but not in mature fruits.

The enzyme catalyses theobromine + S-adenosyl-L-methionine = caffeine + S-adenosyl-L-homocysteine + H(+). It carries out the reaction 1,7-dimethylxanthine + S-adenosyl-L-methionine = caffeine + S-adenosyl-L-homocysteine + H(+). The catalysed reaction is 7-methylxanthine + S-adenosyl-L-methionine = theobromine + S-adenosyl-L-homocysteine + H(+). Its pathway is alkaloid biosynthesis. Its function is as follows. Involved in the biosynthesis of caffeine. Catalyzes the conversion of 7-methylxanthine to caffeine, likely via theobromine as an intermediate. The polypeptide is 3,7-dimethylxanthine N-methyltransferase 1 (Coffea arabica (Arabian coffee)).